The chain runs to 73 residues: Alpha-amylase inhibitor Paim-1 (73 aa).

2 disulfide bridges follow: C8–C24 and C42–C70.

In terms of biological role, inhibits mammalian alpha-amylases specifically but has no action on plant and microbial alpha-amylases. The chain is Alpha-amylase inhibitor Paim-1 from Streptomyces olivaceoviridis (Streptomyces corchorusii).